We begin with the raw amino-acid sequence, 884 residues long: Alanine--tRNA ligase (884 aa).

4 residues coordinate Zn(2+): histidine 562, histidine 566, cysteine 676, and histidine 680.

Belongs to the class-II aminoacyl-tRNA synthetase family. Zn(2+) is required as a cofactor.

It is found in the cytoplasm. The catalysed reaction is tRNA(Ala) + L-alanine + ATP = L-alanyl-tRNA(Ala) + AMP + diphosphate. Functionally, catalyzes the attachment of alanine to tRNA(Ala) in a two-step reaction: alanine is first activated by ATP to form Ala-AMP and then transferred to the acceptor end of tRNA(Ala). Also edits incorrectly charged Ser-tRNA(Ala) and Gly-tRNA(Ala) via its editing domain. This Jannaschia sp. (strain CCS1) protein is Alanine--tRNA ligase.